We begin with the raw amino-acid sequence, 192 residues long: UPF0149 protein YE3397 (192 aa).

It belongs to the UPF0149 family.

This chain is UPF0149 protein YE3397, found in Yersinia enterocolitica serotype O:8 / biotype 1B (strain NCTC 13174 / 8081).